The chain runs to 534 residues: NAD(P)H-quinone oxidoreductase chain 4 (534 aa).

The next 14 helical transmembrane spans lie at 12–32 (FPWLSASILFPIGSAFVIPFF), 44–64 (FALSIALITFLITVGSYINGF), 96–116 (MPLILLTSFITALAVLAAWPV), 120–140 (PKLFFFLILVMDGGQIAVFAV), 144–164 (LLFFLTWELELIPVYLLLAIW), 176–196 (FIIYTAGSSIFILLAALAMGF), 220–240 (ILCYVGLLIAFGVKLPIVPLH), 251–271 (TAPVHMLLAGILLKMGGYALL), 285–305 (FAPLLIVLGVVNIIYAALTSF), 314–334 (IAYSSISHMGFVLIGIGSFSS), 340–360 (AMLQMVSHGLIGASLFFLVGA), 384–404 (FALWTACSLASLALPGMSGFV), 425–445 (VVMASLAAIGVILTPIYLLSM), and 472–492 (VYIIACLLLPIIGIGLYPRLV).

The protein belongs to the complex I subunit 4 family.

The protein resides in the cellular thylakoid membrane. The catalysed reaction is a plastoquinone + NADH + (n+1) H(+)(in) = a plastoquinol + NAD(+) + n H(+)(out). It catalyses the reaction a plastoquinone + NADPH + (n+1) H(+)(in) = a plastoquinol + NADP(+) + n H(+)(out). Functionally, NDH-1 shuttles electrons from NAD(P)H, via FMN and iron-sulfur (Fe-S) centers, to quinones in the respiratory chain. The immediate electron acceptor for the enzyme in this species is believed to be plastoquinone. Couples the redox reaction to proton translocation (for every two electrons transferred, four hydrogen ions are translocated across the cytoplasmic membrane), and thus conserves the redox energy in a proton gradient. This is NAD(P)H-quinone oxidoreductase chain 4 from Prochlorococcus marinus (strain AS9601).